A 457-amino-acid polypeptide reads, in one-letter code: Bifunctional F420 biosynthesis protein FbiB (457 aa).

The interval 1-253 is coenzyme F420:L-glutamate ligase; sequence MTSSDSHRSA…NGPDDLFWLG (253 aa). Residues 29–32, S59, and K64 each bind GTP; that span reads LPEF. D118 contacts a divalent metal cation. N121 contributes to the GTP binding site. A divalent metal cation-binding residues include D159 and T160. Positions 254-457 are dehydro-coenzyme F420-0 reductase; that stretch reads TTEALELGRQ…VRVADLLLRK (204 aa). Residues 269–273 and A297 each bind FMN; that span reads RRSVR. D329 provides a ligand contact to coenzyme F420-(gamma-Glu)n. The FMN site is built by G408 and R445.

In the N-terminal section; belongs to the CofE family. Mg(2+) serves as cofactor. It depends on Mn(2+) as a cofactor. K(+) is required as a cofactor.

The catalysed reaction is oxidized coenzyme F420-0 + GTP + L-glutamate = oxidized coenzyme F420-1 + GDP + phosphate + H(+). The enzyme catalyses oxidized coenzyme F420-1 + GTP + L-glutamate = oxidized coenzyme F420-2 + GDP + phosphate + H(+). It carries out the reaction oxidized coenzyme F420-(gamma-L-Glu)(n) + GTP + L-glutamate = oxidized coenzyme F420-(gamma-L-Glu)(n+1) + GDP + phosphate + H(+). It catalyses the reaction oxidized coenzyme F420-0 + FMN + H(+) = dehydro coenzyme F420-0 + FMNH2. The protein operates within cofactor biosynthesis; coenzyme F420 biosynthesis. Bifunctional enzyme that catalyzes the GTP-dependent successive addition of multiple gamma-linked L-glutamates to the L-lactyl phosphodiester of 7,8-didemethyl-8-hydroxy-5-deazariboflavin (F420-0) to form polyglutamated F420 derivatives, and the FMNH2-dependent reduction of dehydro-F420-0 to form F420-0. This is Bifunctional F420 biosynthesis protein FbiB from Mycobacterium leprae (strain TN).